The sequence spans 38 residues: Large ribosomal subunit protein bL36A (38 aa).

The protein belongs to the bacterial ribosomal protein bL36 family.

The sequence is that of Large ribosomal subunit protein bL36A from Pseudomonas aeruginosa (strain UCBPP-PA14).